We begin with the raw amino-acid sequence, 368 residues long: Homoserine O-acetyltransferase (368 aa).

In terms of domain architecture, AB hydrolase-1 spans 43–346; it reads ILLEHALTGT…EYGHDAFLVE (304 aa). S145 serves as the catalytic Nucleophile. R212 serves as a coordination point for substrate. Catalysis depends on residues D307 and H340. Residue D341 coordinates substrate.

It belongs to the AB hydrolase superfamily. MetX family. Homodimer.

Its subcellular location is the cytoplasm. It carries out the reaction L-homoserine + acetyl-CoA = O-acetyl-L-homoserine + CoA. It functions in the pathway amino-acid biosynthesis; L-methionine biosynthesis via de novo pathway; O-acetyl-L-homoserine from L-homoserine: step 1/1. In terms of biological role, transfers an acetyl group from acetyl-CoA to L-homoserine, forming acetyl-L-homoserine. This is Homoserine O-acetyltransferase from Listeria monocytogenes serovar 1/2a (strain ATCC BAA-679 / EGD-e).